The primary structure comprises 2684 residues: Probable polyketide synthase 27 (2684 aa).

The Ketosynthase family 3 (KS3) domain maps to 11-442 (CGDVAIIGIG…GSNVCLILSE (432 aa)). Residues Cys-183, His-322, and His-365 each act as for beta-ketoacyl synthase activity in the active site. The segment at 650–683 (GVSADIIVGHSLGEMSSSYSSGMIDFETLCYLIY) is acyl/malonyl transferases. Ser-660 (for acyl/malonyl transferase activity) is an active-site residue. The segment at 958-1087 (HEKITSEGPP…GNFSLFKHNS (130 aa)) is N-terminal hotdog fold. In terms of domain architecture, PKS/mFAS DH spans 958 to 1276 (HEKITSEGPP…CTSVSLVNPR (319 aa)). The active-site Proton acceptor; for dehydratase activity is the His-999. Residues 1104–1276 (NFTTISKQEF…CTSVSLVNPR (173 aa)) are C-terminal hotdog fold. Asp-1173 serves as the catalytic Proton donor; for dehydratase activity. The interval 1202 to 1221 (IPSSSSSSKDDNDCDSNNNN) is disordered. The Carrier domain occupies 2585-2662 (SDNEFIHSTI…QSIDIIKFGY (78 aa)). Ser-2622 is modified (O-(pantetheine 4'-phosphoryl)serine).

Pantetheine 4'-phosphate is required as a cofactor.

Its function is as follows. Probable polyketide synthase. In Dictyostelium discoideum (Social amoeba), this protein is Probable polyketide synthase 27 (pks27).